A 397-amino-acid chain; its full sequence is Vacuolar protein sorting-associated protein 37A (397 aa).

Phosphoserine is present on Ser18. The region spanning 308 to 397 (KSTFEKKMQR…AMHSQFHAPL (90 aa)) is the VPS37 C-terminal domain.

The protein belongs to the VPS37 family. Component of the ESCRT-I complex (endosomal sorting complex required for transport I) which consists of TSG101, VPS28, a VPS37 protein (VPS37A to -D) and MVB12A or MVB12B in a 1:1:1:1 stoichiometry. Interacts with TSG101, VPS28 and HGS. Component of an ESCRT-I complex (endosomal sorting complex required for transport I) which consists of TSG101, VPS28, VPS37A and UBAP1 in a 1:1:1:1 stoichiometry.

It is found in the late endosome membrane. The protein localises to the nucleus. Its function is as follows. Component of the ESCRT-I complex, a regulator of vesicular trafficking process. Required for the sorting of endocytic ubiquitinated cargos into multivesicular bodies. May be involved in cell growth and differentiation. The polypeptide is Vacuolar protein sorting-associated protein 37A (Vps37a) (Mus musculus (Mouse)).